Consider the following 499-residue polypeptide: UPF0159 protein Ta1429 (499 aa).

2 ThyX domains span residues 1 to 246 and 271 to 476; these read MIDR…ALSQ and EKVR…IKFV.

Belongs to the UPF0159 family.

This is UPF0159 protein Ta1429 from Thermoplasma acidophilum (strain ATCC 25905 / DSM 1728 / JCM 9062 / NBRC 15155 / AMRC-C165).